We begin with the raw amino-acid sequence, 186 residues long: ADP-ribosylation factor-like protein 8A (186 aa).

Positions 1–19 form an intramembrane region, note=Mediates targeting to membranes; that stretch reads MIALFNKLLDWFKALFWKE. GTP is bound by residues 29-35, 71-75, and 130-133; these read QYSGKTT, DIGGQ, and NKRD.

It belongs to the small GTPase superfamily. Arf family. As to quaternary structure, interacts with PLEKHM1. When GTP-bound, interacts with RUFY3 and RUFY4, but not with RUFY1, nor RUFY2.

It is found in the late endosome membrane. The protein localises to the lysosome membrane. Its subcellular location is the cytoplasm. The protein resides in the cytoskeleton. It localises to the spindle. It is found in the cell projection. The protein localises to the axon. Its subcellular location is the synapse. Plays a role in lysosomes motility. In neurons, mediates the anterograde axonal long-range transport of presynaptic lysosome-related vesicles required for presynaptic biogenesis and synaptic function. May play a role in chromosome segregation. The sequence is that of ADP-ribosylation factor-like protein 8A (Arl8a) from Mus musculus (Mouse).